Consider the following 268-residue polypeptide: Protein APE_1980.1 (268 aa).

The protein belongs to the CinA family.

The polypeptide is Protein APE_1980.1 (Aeropyrum pernix (strain ATCC 700893 / DSM 11879 / JCM 9820 / NBRC 100138 / K1)).